The primary structure comprises 554 residues: Valerianol synthase TPS1A (554 aa).

Mg(2+) contacts are provided by D307 and D311. The short motif at 326–330 is the DDXXD motif element; sequence VQRWD. The Mg(2+) site is built by D452, S456, and E460.

This sequence belongs to the terpene synthase family. The cofactor is Mg(2+). Expressed in flowers.

It catalyses the reaction (2E,6E)-farnesyl diphosphate + H2O = valerianol + diphosphate. It participates in secondary metabolite biosynthesis; terpenoid biosynthesis. Its function is as follows. Terpene synthase that catalyzes the biosynthesis of the terpene valerianol, which is a volatile compound of floral scent. This is Valerianol synthase TPS1A from Camellia hiemalis (Camellia).